The sequence spans 878 residues: MNSKEIRKAWLDFFESKNHFIVPPKSLIPVNDNSLLWINSGVATLKDYFSGKKNPPSKRMANSQKSIRTNDIENVGITARHHTFFEMLGNFSIGGYFKKEAIEFATEFVLDVLKLDRSRLYFTYFHDDLETKNLWISQGFKEEQLIPGDRKTNFWEVGKGPCGPNTEIFYDRGEKYDQRGIELLKNDIENDRYIEIWNIVFSTYNSDGEGNYTELNQKNIDTGAGLERIVSILQDAPTNFDTDLFLPIIHEIEKYTSYRYKIENYFIKDKAQKEINSYFKIIADHMRTVVNAIADGEKPSNLSRGYILRRLIRRSYYKAIQLKITKSPFLYKLVDVIKASLPFEYDSKKVAEVIKEEEVLFSQTISKGKEILEKFISENSSKDLFPGDLAYKLHETYGFPFELTEEILLQKDIKINKEEFNLAKEKHIEASRNQKETGMDKVINSLALIKAKEDEFIGYEHTNSVSKILHLLNEENELSENDGTSYLILDKTPFYATSGGQKHDRGYIEQNGVKLEILNVFKDKFGNHVHKVVGKLSKNYPVTCQVDLKIRRGLERNHSGTHLMFCALRNVFGNQIKQLGSDNNEDRLTFDAPFDSKPTNEEILKVENLVKSYIQKEVDRQYLIMGIDQAKEINAIMTLEEAEYMDSSKLRIVNFNGITADLCGGTHLENTKLLEDFKITSVEKKAAGVYRIRAISSKETIEKYLENQKQELMQELLVLVKKLKDMQFDFKVSLDESLELSSQIQEIKNLTNLASEAIKNKIKENSKKISIDLNEIELENINGNYLYLNDEISKEEIKNLSGVIREKFPNALVILISKGEAQSAISFASKKYNSINVLKELANHFELRGGGNAILAMGSIKDYSQLKTFLKEKYKWEN.

His-558, His-562, Cys-663, and His-667 together coordinate Zn(2+).

This sequence belongs to the class-II aminoacyl-tRNA synthetase family. It depends on Zn(2+) as a cofactor.

The protein localises to the cytoplasm. It carries out the reaction tRNA(Ala) + L-alanine + ATP = L-alanyl-tRNA(Ala) + AMP + diphosphate. In terms of biological role, catalyzes the attachment of alanine to tRNA(Ala) in a two-step reaction: alanine is first activated by ATP to form Ala-AMP and then transferred to the acceptor end of tRNA(Ala). Also edits incorrectly charged Ser-tRNA(Ala) and Gly-tRNA(Ala) via its editing domain. The polypeptide is Alanine--tRNA ligase (Mycoplasmopsis synoviae (strain 53) (Mycoplasma synoviae)).